A 398-amino-acid chain; its full sequence is Streptopain (398 aa).

Positions M1–A27 are cleaved as a signal peptide. The propeptide occupies D28–K145. The active-site Nucleophile is the C192. At C192 the chain carries Cysteine methyl disulfide; in zymogen form. A protein-binding residues include S282 and G339. H340 serves as the catalytic Proton acceptor. The interval R368–Q390 is C-terminal active site loop.

Belongs to the peptidase C10 family. Monomer. In terms of processing, the mature protease is derived from the precursor sequence by cleavage, either in cis via an autocatalytic mechanism, or in trans by mature SpeB or host proteases (trypsin, plasmin or subtilisin). Maturation can involve a number of protein cleavage intermediates. Mature SpeB probably plays the most important role in protein maturation in physiological conditions. Post-translationally, methylthiolation at Cys-192 of the inactive zymogen form is probably involved in the mechanism of secretion of the proteinase into the culture fluid.

The protein localises to the secreted. It is found in the host extracellular space. The protein resides in the host cytoplasm. The enzyme catalyses Preferential cleavage with hydrophobic residues at P2, P1 and P1'.. Its activity is regulated as follows. Synthesized as an inactive zymogen to protect the intracellular components of the bacteria from proteolytic activity during protein production. Once secreted into the extracellular milieu, cleaved into the active protease: maturation can be mediated in cis by autocatalytic cleavage, or in trans by mature SpeB or host proteases. Protease activity is strongly inhibited by zinc and copper, which prevent its maturation into an active protease: inhibition by metal ions may be required to prevent proteolysis of streptococcal proteins. In terms of biological role, cysteine protease that acts as a key streptococcal virulence factor by cleaving host proteins involved in immune response. Triggers inflammation by mediating cleavage of host proteins, which can both promote host pathogenesis by triggering sterile inflammation and/or restrict streptococcal infection, depending on host immune statue and infection site. Cleaves host gasdermin-A (GSDMA) in epithelial cells, promoting GSDMA activation and formation of gasdermin pores, triggering pyroptosis. Pyroptosis triggers the elimination of the infected skin cell, depriving the pathogen of its protective niche, while inducing an inflammatory response. This ultimately prevents bacterial penetration of the epithelial barrier and a subsequent systemic dissemination of the pathogen. Also mediates cleavage of the cytokine precursor interleukin-1 beta (IL1B) to its mature form, resulting in inflammation and septic shock. SpeB-mediated maturation of IL1B plays a dual role depending on infection site: while IL1B inflammatory response prevents bacterial growth during invasive skin infections, it promotes streptococcal infection of the nasopharynx by disrupting colonization resistance mediated by the microbiota. Inhibits host autophagy be catalyzing cleavage and inactivation of key autophagy factors, such as CALCOCO2, NBR1 and SQSTM1. Cleaves and inhibits a number of complement factors, such as C2, C3-beta chain of C3, C4, C5 or SERPING1, thereby promoting evasion of host immunity. May also impair adaptive immunity by catalyzing cleavage and degradation of host immunoglobulins to promote immune system evasion; the relevance of this activity is however unsure in vivo. Catalyzes maturation and release of the peptide hormone bradykinin from the precursor Kininogen-1 (KNG1) to produce hypotension during septic shock. Also involved in bacterial translocation across the host epithelial barrier by mediating cleavage and degradation of host epithelial junction proteins, such as CDH1 and OCLN. Additionally, has been involved in degradation of fibronectin and vitronectin, two host extracellular matrix proteins involved in tissue integrity. Also able to catalyze cleavage and degradation of streptococcal proteins, such as C5a peptidase, EndoS or SmeZ. Degradation of streptococcal proteins is however strictly regulated to preserve integrity of other virulence factors. In Streptococcus pyogenes serotype M3 (strain ATCC BAA-595 / MGAS315), this protein is Streptopain (speB).